The following is a 307-amino-acid chain: E3 ubiquitin-protein ligase PHF7 (307 aa).

The C2HC pre-PHD-type zinc finger occupies 30–68 (SPVCLLCLQEPGDPEKLGEFLQKDNLCVHYFCLILSSRL). Positions 33, 36, 58, and 61 each coordinate Zn(2+). Residues 67–92 (RLPQKGQPNRGLHGFMPEDIKREAVR) are required for interaction and ubiquitination of the nucleosome core particle. The PHD-type zinc-finger motif lies at 96-145 (KICFVCKKKGAAIRCQNDQCVQNFHLPCGQERGCLSQFFGEYKSYCRKHR). Residues Cys98, Cys101, Cys110, Cys115, His120, Cys123, Cys141, His144, Cys160, Cys163, Cys179, Cys180, His186, Cys189, Cys204, Cys207, Cys248, Cys253, Cys273, Cys276, His282, Cys285, Cys297, and Cys300 each contribute to the Zn(2+) site. Residues 150 to 307 (IHQGSLGEES…NECLPASTTS (158 aa)) are required for interaction with ubiquitinated UBE2D2. An RING-type; degenerate zinc finger spans residues 160–208 (CVLCCENLSRTSVENIQSPCCSQAIYHRKCIQKYAHTSAKHFFKCPQCN). The tract at residues 244–301 (RYRHCDAPICLYEQGRDSFEDEGRWRLILCATCGSHGTHRDCSSLRPNSKKWECNECL) is required for association with and ubiquitination of H3.

Interacts with MEF2C; the interaction promotes MEF2C binding to its transcription targets. Interacts with GATA4; the interaction promotes GATA4 binding to its transcription targets. Interacts with UBE2D2; the interaction inhibits cleavage of PHF7 and promotes association of the complex with the nucleosome core particle. Expressed in Leydig cells and in developing spermatids (at protein level). Highly expressed in Sertoli cells in testis.

The protein resides in the nucleus. The catalysed reaction is S-ubiquitinyl-[E2 ubiquitin-conjugating enzyme]-L-cysteine + [acceptor protein]-L-lysine = [E2 ubiquitin-conjugating enzyme]-L-cysteine + N(6)-ubiquitinyl-[acceptor protein]-L-lysine.. It functions in the pathway protein modification; protein ubiquitination. Its function is as follows. E3 ubiquitin-protein ligase which ubiquitinates histone H3 at 'Lys-14'. Required for male fertility, via inhibition of SPOP-mediated BRDT degradation when in the presence of acetylated histone H4 in early condensing spermatids. Stabilization of BRDT allows it to facilitate histone removal in early condensing spermatids and promote the progression of histone-to-protamine exchange. Promotes the expression of steroidogenesis proteins in the testes, and as a result plays a role in maintaining testosterone levels and repressing osteoclastogenesis. Promotes transcription of cardiac enhancer genes by facilitating binding of cardiac transcription factors such as MEF2C and GATA4 to target gene promoters. Ubiquitinates histone H4. Ubiquitinates histone H2A and H3 as part of the nucleosome core particle. The protein is E3 ubiquitin-protein ligase PHF7 of Mus musculus (Mouse).